A 425-amino-acid chain; its full sequence is (S)-6-hydroxynicotine oxidase (425 aa).

Residues Ser12, Glu31, 38–39, and 56–59 each bind FAD; these read GR and GGAY. Asn166 serves as a coordination point for (S)-6-hydroxynicotine. Residue Val226 coordinates FAD. (S)-6-hydroxynicotine contacts are provided by Tyr311, Phe326, and Trp371. FAD is bound by residues Ser398 and 406 to 408; that span reads GYI. Tyr407 is a (S)-6-hydroxynicotine binding site.

Belongs to the flavin monoamine oxidase family. Homodimer. FAD is required as a cofactor.

The protein resides in the cytoplasm. The catalysed reaction is (S)-6-hydroxynicotine + O2 + H2O = 6-hydroxypseudooxynicotine + H2O2. It carries out the reaction (S)-6-hydroxynicotine + O2 = 6-hydroxy-N-methylmyosmine + H2O2. It functions in the pathway alkaloid degradation; nicotine degradation; 6-hydroxypseudooxynicotine from nicotine (S-isomer route): step 2/2. Inhibited by (R)-6-hydroxynicotine. Inhibited by high concentrations of phenanthroline. Activity is strongly affected by Hg(2+) and p-chloromercuriphenylsulfonate, but not by N-ethylmaleimide and 5,5'-dithiobis-(2-nitrobenzoate). Involved in the degradation of L-nicotine. Catalyzes the oxidation of (S)-6-hydroxynicotine (6-hydroxy-L-nicotine) to 6-hydroxypseudooxynicotine. Oxidation of the pyrrolidine ring of (S)-6-hydroxynicotine leads to the formation of the optically inactive 6-hydroxy-N-methylmyosmine, which hydrolyzes spontaneously to 6-hydroxypseudooxynicotine. Acts with absolute stereospecificity on the L-form of 6-hydroxynicotine. Can also use (S)-6-hydroxynornicotine. This is (S)-6-hydroxynicotine oxidase from Paenarthrobacter nicotinovorans (Arthrobacter nicotinovorans).